A 145-amino-acid chain; its full sequence is Acidic phospholipase A2 1 (145 aa).

The signal sequence occupies residues 1–21 (MYPAHLLVLLAVCVSLLGATA). Residues 22–27 (IPPLPL) constitute a propeptide that is removed on maturation. Intrachain disulfides connect Cys38–Cys98, Cys54–Cys144, Cys56–Cys72, Cys71–Cys125, Cys78–Cys118, Cys87–Cys111, and Cys105–Cys116. Residues Tyr55, Gly57, and Gly59 each coordinate Ca(2+). The active site involves His75. Asp76 serves as a coordination point for Ca(2+). Asp119 is a catalytic residue.

Belongs to the phospholipase A2 family. Group I subfamily. D49 sub-subfamily. Monomer. Ca(2+) serves as cofactor. Expressed by the venom gland.

It localises to the secreted. It catalyses the reaction a 1,2-diacyl-sn-glycero-3-phosphocholine + H2O = a 1-acyl-sn-glycero-3-phosphocholine + a fatty acid + H(+). Its function is as follows. PLA2 catalyzes the calcium-dependent hydrolysis of the 2-acyl groups in 3-sn-phosphoglycerides. This chain is Acidic phospholipase A2 1, found in Laticauda semifasciata (Black-banded sea krait).